We begin with the raw amino-acid sequence, 510 residues long: 1,3-beta-glucanosyltransferase gas5 (510 aa).

The first 22 residues, 1-22 (MNFLHFLTTSLLLLGGSRLALA), serve as a signal peptide directing secretion. Cysteines 70 and 99 form a disulfide. Residue Tyr88 participates in (1,3-beta-D-glucosyl)n binding. An N-linked (GlcNAc...) asparagine glycan is attached at Asn147. Positions 158, 159, 200, and 205 each coordinate (1,3-beta-D-glucosyl)n. Glu159 acts as the Proton donor in catalysis. Cystine bridges form between Cys214/Cys353 and Cys232/Cys264. N-linked (GlcNAc...) asparagine glycans are attached at residues Asn216 and Asn252. Glu261 (nucleophile) is an active-site residue. Tyr300 is a binding site for (1,3-beta-D-glucosyl)n. Asn318, Asn337, and Asn397 each carry an N-linked (GlcNAc...) asparagine glycan. The segment at 424–456 (QSSTSGSSSGSSSASTTASSSSVSSGSSISSGS) is disordered. Ser485 carries the GPI-anchor amidated serine lipid modification. Positions 486–510 (SASTFNLSRFYVFAGILAISGLVFA) are cleaved as a propeptide — removed in mature form. An N-linked (GlcNAc...) asparagine glycan is attached at Asn491.

Belongs to the glycosyl hydrolase 72 family. In terms of processing, the GPI-anchor is attached to the protein in the endoplasmic reticulum and serves to target the protein to the cell surface. There, the glucosamine-inositol phospholipid moiety is cleaved off and the GPI-modified mannoprotein is covalently attached via its lipidless GPI glycan remnant to the 1,6-beta-glucan of the outer cell wall layer.

Its subcellular location is the secreted. The protein resides in the cell wall. It localises to the membrane. Its function is as follows. Splits internally a 1,3-beta-glucan molecule and transfers the newly generated reducing end (the donor) to the non-reducing end of another 1,3-beta-glucan molecule (the acceptor) forming a 1,3-beta linkage, resulting in the elongation of 1,3-beta-glucan chains in the cell wall. The polypeptide is 1,3-beta-glucanosyltransferase gas5 (gas5) (Schizosaccharomyces pombe (strain 972 / ATCC 24843) (Fission yeast)).